Here is a 349-residue protein sequence, read N- to C-terminus: tRNA pseudouridine synthase D (349 aa).

Phe-27 serves as a coordination point for substrate. Asp-80 functions as the Nucleophile in the catalytic mechanism. Position 129 (Asn-129) interacts with substrate. A TRUD domain is found at Gly-155 to Leu-303. Residue Phe-329 coordinates substrate.

It belongs to the pseudouridine synthase TruD family.

The catalysed reaction is uridine(13) in tRNA = pseudouridine(13) in tRNA. Functionally, responsible for synthesis of pseudouridine from uracil-13 in transfer RNAs. This is tRNA pseudouridine synthase D from Escherichia coli O6:H1 (strain CFT073 / ATCC 700928 / UPEC).